Here is an 897-residue protein sequence, read N- to C-terminus: DNA polymerase I (897 aa).

The 5'-3' exonuclease domain occupies 1-317 (MEQPVIKEGT…ILDNTPALDN (317 aa)). The 3'-5' exonuclease domain maps to 318 to 494 (APKKSRMIVL…RLCEYFEKGG (177 aa)). Residues 498-896 (DLLTLARDIE…FIAKRWNELK (399 aa)) are polymerase.

It belongs to the DNA polymerase type-A family. As to quaternary structure, single-chain monomer with multiple functions.

It carries out the reaction DNA(n) + a 2'-deoxyribonucleoside 5'-triphosphate = DNA(n+1) + diphosphate. Its function is as follows. In addition to polymerase activity, this DNA polymerase exhibits 3'-5' and 5'-3' exonuclease activity. The chain is DNA polymerase I (polA) from Helicobacter pylori (strain J99 / ATCC 700824) (Campylobacter pylori J99).